The following is a 54-amino-acid chain: Potassium channel toxin alpha-KTx 14.x (54 aa).

Positions 1–23 are cleaved as a signal peptide; it reads MKIFFAILLILAVCSMAIWTVNG. Cystine bridges form between Cys30/Cys46, Cys36/Cys51, and Cys40/Cys53.

This sequence belongs to the short scorpion toxin superfamily. Potassium channel inhibitor family. Alpha-KTx 14 subfamily. Expressed by the venom gland.

The protein resides in the secreted. In terms of biological role, potassium channels inhibitor. This Olivierus martensii (Manchurian scorpion) protein is Potassium channel toxin alpha-KTx 14.x.